The sequence spans 174 residues: Glycine-rich protein 5 (174 aa).

The N-terminal stretch at 1–22 is a signal peptide; the sequence is MASKSLFLVALLVGSFAFTSFA.

As to expression, mostly expressed in immature seed pods, and, to a lower extent, in stems and leaves. Present in phloem and epiderm in leaves, stems, flowers and fruits.

The protein localises to the vacuole. In terms of biological role, involved in organ growth by promoting cell elongation processes. This chain is Glycine-rich protein 5, found in Arabidopsis thaliana (Mouse-ear cress).